The primary structure comprises 334 residues: Protein-methionine-sulfoxide reductase catalytic subunit MsrP (334 aa).

A signal peptide (tat-type signal) is located at residues M1–A44. Mo-molybdopterin is bound by residues N88, Y91–E92, C146, T181, N233, R238, and G249–K251.

Belongs to the MsrP family. Heterodimer of a catalytic subunit (MsrP) and a heme-binding subunit (MsrQ). It depends on Mo-molybdopterin as a cofactor. Exported by the Tat system. Can also be exported by the Sec system.

The protein localises to the periplasm. It carries out the reaction L-methionyl-[protein] + a quinone + H2O = L-methionyl-(S)-S-oxide-[protein] + a quinol. It catalyses the reaction L-methionyl-[protein] + a quinone + H2O = L-methionyl-(R)-S-oxide-[protein] + a quinol. Functionally, part of the MsrPQ system that repairs oxidized periplasmic proteins containing methionine sulfoxide residues (Met-O), using respiratory chain electrons. Thus protects these proteins from oxidative-stress damage caused by reactive species of oxygen and chlorine. MsrPQ is essential for the maintenance of envelope integrity under bleach stress, rescuing a wide series of structurally unrelated periplasmic proteins from methionine oxidation, including the primary periplasmic chaperone SurA and the lipoprotein Pal. The catalytic subunit MsrP is non-stereospecific, being able to reduce both (R-) and (S-) diastereoisomers of methionine sulfoxide. Can catalyze the reduction of a variety of substrates in vitro, including dimethyl sulfoxide, trimethylamine N-oxide, phenylmethyl sulfoxide and L-methionine sulfoxide. Cannot reduce cyclic N-oxides. Shows no activity as sulfite oxidase. The protein is Protein-methionine-sulfoxide reductase catalytic subunit MsrP of Escherichia coli (strain K12).